The chain runs to 90 residues: MVRSVKCIRLGCEAEGLDFPPYPGELGKRIFDNVSKEAWSQWIKHQTMLVNEMRLNLADIKARKYLASQMEAYFFGEGADQPAGYIPPDK.

This sequence belongs to the Fe(2+)-trafficking protein family.

In terms of biological role, could be a mediator in iron transactions between iron acquisition and iron-requiring processes, such as synthesis and/or repair of Fe-S clusters in biosynthetic enzymes. In Nitrosomonas europaea (strain ATCC 19718 / CIP 103999 / KCTC 2705 / NBRC 14298), this protein is Probable Fe(2+)-trafficking protein.